A 318-amino-acid polypeptide reads, in one-letter code: Inactive dihydropteroate synthase 2 (318 aa).

The disordered stretch occupies residues 1–25; sequence MRSTPPASAGRSTPPALAGHSTPPA. One can recognise a Pterin-binding domain in the interval 42 to 299; that stretch reads ALIMAIVNRT…EVAATRRVLE (258 aa).

This sequence belongs to the DHPS family. Homodimer.

In terms of biological role, has very low affinity for the DHPS substrate 6-hydroxymethyl-7,8-dihydropterin-pyrophosphate, but can bind the inhibitor dapsone. Seems to lack dihydropteroate synthase activity, and does probably not function in folate metabolism. The chain is Inactive dihydropteroate synthase 2 (folP2) from Mycobacterium bovis (strain ATCC BAA-935 / AF2122/97).